The chain runs to 164 residues: Peptide deformylase-like (164 aa).

Glutamate 133 is an active-site residue.

The protein belongs to the polypeptide deformylase family.

The protein is Peptide deformylase-like of Agrobacterium fabrum (strain C58 / ATCC 33970) (Agrobacterium tumefaciens (strain C58)).